Here is a 186-residue protein sequence, read N- to C-terminus: Large ribosomal subunit protein uL5 (186 aa).

It belongs to the universal ribosomal protein uL5 family. Part of the 50S ribosomal subunit; part of the 5S rRNA/L5/L18/L25 subcomplex. Contacts the 5S rRNA and the P site tRNA. Forms a bridge to the 30S subunit in the 70S ribosome.

In terms of biological role, this is one of the proteins that bind and probably mediate the attachment of the 5S RNA into the large ribosomal subunit, where it forms part of the central protuberance. In the 70S ribosome it contacts protein S13 of the 30S subunit (bridge B1b), connecting the 2 subunits; this bridge is implicated in subunit movement. Contacts the P site tRNA; the 5S rRNA and some of its associated proteins might help stabilize positioning of ribosome-bound tRNAs. This Mycoplasmopsis synoviae (strain 53) (Mycoplasma synoviae) protein is Large ribosomal subunit protein uL5.